The sequence spans 1028 residues: Serine/threonine-protein kinase fray2 (1028 aa).

The interval 1-67 (MSDDKYHHDK…PKPRKNYPNS (67 aa)) is disordered. The segment covering 20 to 54 (KQSTAAALSSSSTLASSSSMTTTTTTTSTTTTAAS) has biased composition (low complexity). Residues 71–330 (YELKETIGKG…PSKLLEHRFF (260 aa)) form the Protein kinase domain. ATP-binding positions include 77–85 (IGKGGSGLV) and Lys100. The active-site Proton acceptor is Asp195. Thr230 bears the Phosphothreonine; by autocatalysis mark. Residues 368-381 (TSSPQFDTGHSNSA) show a composition bias toward polar residues. 3 disordered regions span residues 368–467 (TSSP…STVV), 486–561 (AYHQ…LQQP), and 580–914 (DLIT…IQSK). Composition is skewed to low complexity over residues 387–419 (PNEN…NNNN) and 432–458 (TPSH…SNHT). 2 stretches are compositionally biased toward polar residues: residues 503-518 (IPNH…SAHS) and 528-542 (IHPT…VVNN). Low complexity predominate over residues 543-561 (TQQPQTLQPPQQQHQLQQP). Residues 595–616 (IPSSSSHGNIPSLVTTSPKSPL) show a composition bias toward polar residues. Low complexity-rich tracts occupy residues 617 to 642 (QHQQ…ISSN) and 683 to 700 (SSRA…SHTS). 4 stretches are compositionally biased toward basic and acidic residues: residues 701–714 (SSDE…SDRK), 728–742 (SKRD…DRSN), 753–855 (VSRD…DRSR), and 865–893 (SRDS…DYKS).

It belongs to the protein kinase superfamily. STE Ser/Thr protein kinase family. STE20 subfamily. Mn(2+) is required as a cofactor. Undergoes autophosphorylation in the catalytic domain.

It catalyses the reaction L-seryl-[protein] + ATP = O-phospho-L-seryl-[protein] + ADP + H(+). The catalysed reaction is L-threonyl-[protein] + ATP = O-phospho-L-threonyl-[protein] + ADP + H(+). This Dictyostelium discoideum (Social amoeba) protein is Serine/threonine-protein kinase fray2.